Consider the following 191-residue polypeptide: Ion-translocating oxidoreductase complex subunit B (191 aa).

A hydrophobic region spans residues 1-26; that stretch reads MSAIWIAIAVLSALSLVFGGLLGYAS. The 60-residue stretch at 32–91 folds into the 4Fe-4S domain; sequence EEDPIVEQIDAILPQSQCGQCGYPGCRPYADAVGNNGEMINKCAPGGEQTMLKLAALLNV. [4Fe-4S] cluster is bound by residues C49, C52, C57, C74, C116, C119, C122, C126, C146, C149, C152, and C156. 4Fe-4S ferredoxin-type domains follow at residues 107–136 and 137–166; these read KVAWIDEANCIGCTKCIQACPVDAIVGATR and AMHTVLSDICTGCDLCVAPCPTDCIEMRPV.

The protein belongs to the 4Fe4S bacterial-type ferredoxin family. RnfB subfamily. In terms of assembly, the complex is composed of six subunits: RnfA, RnfB, RnfC, RnfD, RnfE and RnfG. [4Fe-4S] cluster serves as cofactor.

It is found in the cell inner membrane. Its function is as follows. Part of a membrane-bound complex that couples electron transfer with translocation of ions across the membrane. The sequence is that of Ion-translocating oxidoreductase complex subunit B from Erwinia tasmaniensis (strain DSM 17950 / CFBP 7177 / CIP 109463 / NCPPB 4357 / Et1/99).